Here is a 677-residue protein sequence, read N- to C-terminus: MTQVAKKILVTCALPYANGSIHLGHMLEHIQADVWVRYQRMRGHQVNFICADDAHGTPIMLKAQQLGITPEQMIGEMSQEHQTDFAGFNISYDNYHSTHSEENRELSELIYTRLKENGFIKNRTISQLYDPEKGMFLPDRFVKGTCPKCKSPDQYGDNCEVCGATYSPTELIEPKSVVSGATPVMRDSEHFFFDLPSFSEMLQAWTRSGALQEQVANKMQEWFESGLQQWDISRDAPYFGFEIPNAPGKFFYVWLDAPIGYMGSFKNLCNKRGDLTSFDDYWKKDSDAELYHFIGKDIVYFHSLFWPAMLEGSGFRKPTNLFVHGYVTVNGAKMSKSRGTFIKASTWLNHFDADSLRYYYTAKLSSRIDDIDLNLEDFVQRVNADIVNKVVNLASRNAGFINKRFDGVLAAELADPALYKTFTDAAAVIGEAWESREFGKAIREIMALADMANRYVDEQAPWVVAKQEGRDADLQAICSMGINLFRVLMTYLKPVLPTLSERVEAFLNTELSWDAIAQPLLGHKVNAFKALYNRIDMKQVDALVEASKEEVKAAAAPVTGPLADDPIQETITFDDFAKVDLRVALIENAEFVEGSDKLLRLTLDLGGEKRNVFSGIRSAYPDPQALIGRHTVMVANLAPRKMRFGISEGMVMAAGPGGKDIFLLSPDDGAKPGQQVK.

The 'HIGH' region motif lies at 15 to 25; sequence PYANGSIHLGH. 4 residues coordinate Zn(2+): Cys146, Cys149, Cys159, and Cys162. The 'KMSKS' region signature appears at 333-337; the sequence is KMSKS. Residue Lys336 coordinates ATP. The tRNA-binding domain maps to 575–677; the sequence is DFAKVDLRVA…DGAKPGQQVK (103 aa).

The protein belongs to the class-I aminoacyl-tRNA synthetase family. MetG type 1 subfamily. As to quaternary structure, homodimer. It depends on Zn(2+) as a cofactor.

The protein resides in the cytoplasm. It catalyses the reaction tRNA(Met) + L-methionine + ATP = L-methionyl-tRNA(Met) + AMP + diphosphate. Is required not only for elongation of protein synthesis but also for the initiation of all mRNA translation through initiator tRNA(fMet) aminoacylation. The polypeptide is Methionine--tRNA ligase (Citrobacter koseri (strain ATCC BAA-895 / CDC 4225-83 / SGSC4696)).